The following is a 208-amino-acid chain: Large ribosomal subunit protein uL3 (208 aa).

The segment at 117 to 149 (GFQGAIKRHGQSRGPMAHGSRYHRRPGSMGPVA) is disordered.

It belongs to the universal ribosomal protein uL3 family. In terms of assembly, part of the 50S ribosomal subunit. Forms a cluster with proteins L14 and L19.

Its function is as follows. One of the primary rRNA binding proteins, it binds directly near the 3'-end of the 23S rRNA, where it nucleates assembly of the 50S subunit. The chain is Large ribosomal subunit protein uL3 from Exiguobacterium sp. (strain ATCC BAA-1283 / AT1b).